Consider the following 358-residue polypeptide: MTAAAAQIDMSALAHNLQKIKQQAPNSKLLAVVKANGYGHGLLNIAKGAHGVDAFGVARIEEALQLRAGGIVKQVLLLEGFYSAGDLPILVANNIQTAVHCKEQLEALENADLEGPVVVWLKVDSGMHRLGIRPEEYQEYVDRLHACKNVAQPLRYMSHFGCADELDNPTTNEQIETFMSLTDGCQGERSLAASAGLLAWPDSQLDWVRPGIIMYGVSPFSEKTAQDLGYLPTMTLTSHLIAVREVKAGESVGYGAMWTSERDTKIGVIAIGYGDGYPIAAPNGTPVLVNGRKVPVAGRVSMDMLTVDLGPDAEDNVGDEAILWGRDLPAEEVAEHIGTIAYELVTKLTSRVQMQYIP.

Catalysis depends on K34, which acts as the Proton acceptor; specific for D-alanine. K34 is modified (N6-(pyridoxal phosphate)lysine). Position 129 (R129) interacts with substrate. Y254 serves as the catalytic Proton acceptor; specific for L-alanine. Residue M302 coordinates substrate.

Belongs to the alanine racemase family. Requires pyridoxal 5'-phosphate as cofactor.

It carries out the reaction L-alanine = D-alanine. Its pathway is amino-acid biosynthesis; D-alanine biosynthesis; D-alanine from L-alanine: step 1/1. Catalyzes the interconversion of L-alanine and D-alanine. May also act on other amino acids. In Aliivibrio salmonicida (strain LFI1238) (Vibrio salmonicida (strain LFI1238)), this protein is Alanine racemase (alr).